The primary structure comprises 581 residues: uncharacterized protein (581 aa).

The residue at position 28 (Ser28) is a Phosphoserine. The next 11 membrane-spanning stretches (helical) occupy residues 61–81, 100–120, 125–145, 187–207, 214–234, 340–360, 382–402, 426–446, 458–478, 486–506, and 522–542; these read LVLI…AGSA, AGVL…ATFL, CVYL…ALVK, IYIL…GYIA, WIGW…LFTF, IFLF…DAWL, AVAI…IYGG, LWLM…FGIG, VGLG…MAYL, VLEA…VFTF, and ISIG…ILCG.

Belongs to the major facilitator superfamily.

Its subcellular location is the cytoplasm. The protein localises to the cell cortex. It localises to the membrane. This is an uncharacterized protein from Schizosaccharomyces pombe (strain 972 / ATCC 24843) (Fission yeast).